Consider the following 1012-residue polypeptide: PHD finger protein 20 (1012 aa).

2 Tudor domains span residues 4–69 (HPPN…RPLE) and 83–147 (GSSE…GNAR). The segment at 142-336 (IVGNARPKET…RSSRLSTNGT (195 aa)) is disordered. The segment covering 147–245 (RPKETDHKSL…QVDKKPENDI (99 aa)) has biased composition (basic and acidic residues). Position 159 is a phosphoserine (S159). Positions 257–269 (KRKRGRPPSIAPT) form a DNA-binding region, a.T hook. The span at 271–280 (VDSNSQTLQP) shows a compositional bias: polar residues. Positions 297–325 (PLKRPRLDKNSSQEKSKNYSENTDKDLSR) are enriched in basic and acidic residues. A C2H2-type zinc finger spans residues 452–477 (FRCKVVDCLKFFRKAKLLHYHMKYFH). Positions 481-490 (KSLEPEESPG) are enriched in basic and acidic residues. The segment at 481–611 (KSLEPEESPG…KGKVKALEED (131 aa)) is disordered. S488 is modified (phosphoserine). Residues 497-509 (RGPSASDKPSQET) are compositionally biased toward polar residues. Positions 522-538 (TKDKEKNKEKKFKEFVR) are enriched in basic and acidic residues. Residues 539-551 (VKPKKKKKKKKKT) are compositionally biased toward basic residues. The segment at 654 to 700 (RCICEVQEENDFMIQCEECQCWQHGVCMGLLEENVPEKYTCYVCQDP) adopts a PHD-type zinc-finger fold. K843 is modified (N6-acetyllysine). Positions 866–912 (DAVNPLHENGDDSLSPRLGWPLDQDRSKGDSDPKPGSPKVKEYVSKK) are disordered. A phosphoserine mark is found at S878 and S880. The span at 888 to 912 (DQDRSKGDSDPKPGSPKVKEYVSKK) shows a compositional bias: basic and acidic residues.

As to quaternary structure, homodimer; disulfide-linked. Component of some MLL1/MLL complex, at least composed of the core components KMT2A/MLL1, ASH2L, HCFC1, WDR5 and RBBP5, as well as the facultative components BACC1, CHD8, E2F6, HSP70, INO80C, KANSL1, LAS1L, MAX, MCRS1, MGA, KAT8/MOF, PELP1, PHF20, PRP31, RING2, RUVB1/TIP49A, RUVB2/TIP49B, SENP3, TAF1, TAF4, TAF6, TAF7, TAF9 and TEX10. Component of the NSL complex at least composed of MOF/KAT8, KANSL1, KANSL2, KANSL3, MCRS1, PHF20, OGT1/OGT, WDR5 and HCFC1. Ubiquitinated by TRIM26; leading to proteasomal degradation. As to expression, expressed in heart, kidney, liver, lung, pancreas, placenta, spleen and testis. Not expressed in brain, skeletal muscle, colon, ovary, prostate, small intestine and thymus. Expressed in colon and ovary cancer cell lines while it is not expressed in the respective normal tissues.

It localises to the nucleus. Functionally, methyllysine-binding protein, component of the MOF histone acetyltransferase protein complex. Not required for maintaining the global histone H4 'Lys-16' acetylation (H4K16ac) levels or locus specific histone acetylation, but instead works downstream in transcriptional regulation of MOF target genes. As part of the NSL complex it may be involved in acetylation of nucleosomal histone H4 on several lysine residues. Contributes to methyllysine-dependent p53/TP53 stabilization and up-regulation after DNA damage. This Homo sapiens (Human) protein is PHD finger protein 20 (PHF20).